A 383-amino-acid chain; its full sequence is uncharacterized protein (383 aa).

The tract at residues 1–55 (MSSKLTVNAHYSPLKDEDPLDHIDSQTALDSMETDSTGKSSLYFSKSDDPLSKDI) is disordered. The segment covering 13-24 (PLKDEDPLDHID) has biased composition (basic and acidic residues). Residues 25-44 (SQTALDSMETDSTGKSSLYF) show a composition bias toward polar residues. Residues 46-55 (KSDDPLSKDI) are compositionally biased toward basic and acidic residues. Helical transmembrane passes span 87–107 (LTIF…TILN), 112–132 (NIIN…SLMV), 157–177 (FIFV…FVPV), 179–199 (FYQI…FVLL), 205–225 (LFPF…VRFE), 228–248 (VAPI…IESV), 262–282 (LIYI…VASL), 299–319 (FFIV…ATFT), 329–349 (YMIS…AFLG), and 352–372 (LYGN…LYTL).

This sequence belongs to the TPT transporter family.

Its subcellular location is the membrane. This is an uncharacterized protein from Schizosaccharomyces pombe (strain 972 / ATCC 24843) (Fission yeast).